The chain runs to 1060 residues: Probable serine/threonine-protein kinase MARK-A (1060 aa).

Basic and acidic residues-rich tracts occupy residues 1–11 (METLKEEEQFR) and 23–37 (HLKE…EREQ). 2 disordered regions span residues 1–52 (METL…LQLQ) and 67–88 (NKIP…SISV). Low complexity-rich tracts occupy residues 38–52 (QQQQ…LQLQ) and 68–88 (KIPS…SISV). Residues 109-361 (YLVIKTIGRG…MEEIINHPWL (253 aa)) form the Protein kinase domain. ATP-binding positions include 115 to 123 (IGRGQFGKV) and lysine 139. Aspartate 232 serves as the catalytic Proton acceptor. The segment covering 409–475 (INNINNTMAT…TTTTNATTTT (67 aa)) has biased composition (low complexity). 4 disordered regions span residues 409–488 (INNI…NNEE), 560–701 (GENS…SPLC), 714–886 (LREK…PVHS), and 899–966 (DDKS…QEPR). Residues 488–528 (ELDQEIIEELVGLGFEREELCNSIRQNKYNDAASTYFLLQG) enclose the UBA domain. The span at 577 to 594 (TVDSPKSTNTPQYRSSNT) shows a compositional bias: polar residues. Composition is skewed to low complexity over residues 603-613 (QQQQQQQQQQQ), 620-637 (QQQN…NNHN), 650-699 (STTV…NPSP), and 720-760 (TTTN…TSPN). Residues 761–770 (LQPFSLASTA) show a composition bias toward polar residues. Composition is skewed to low complexity over residues 771–799 (NNNN…SLNS) and 811–831 (QQQQ…NSSS). Positions 837–846 (QRQESRKLED) are enriched in basic and acidic residues. Low complexity-rich tracts occupy residues 904–926 (NSSS…TNNT) and 935–965 (QNSN…QQEP). In terms of domain architecture, KA1 spans 1008–1057 (IECETEGVRFSIEICRLPRLSVNGLKFKRIGGSSWRYKSICKDLLSQMKL).

The protein belongs to the protein kinase superfamily. CAMK Ser/Thr protein kinase family. SNF1 subfamily.

The enzyme catalyses L-seryl-[protein] + ATP = O-phospho-L-seryl-[protein] + ADP + H(+). The catalysed reaction is L-threonyl-[protein] + ATP = O-phospho-L-threonyl-[protein] + ADP + H(+). The protein is Probable serine/threonine-protein kinase MARK-A (mrkA) of Dictyostelium discoideum (Social amoeba).